Here is a 369-residue protein sequence, read N- to C-terminus: uncharacterized protein (369 aa).

This is an uncharacterized protein from Archaeoglobus fulgidus (strain ATCC 49558 / DSM 4304 / JCM 9628 / NBRC 100126 / VC-16).